The following is a 250-amino-acid chain: Proteasome subunit alpha type-2 (250 aa).

Lys-108 participates in a covalent cross-link: Glycyl lysine isopeptide (Lys-Gly) (interchain with G-Cter in ubiquitin).

It belongs to the peptidase T1A family. As to quaternary structure, the 26S proteasome consists of a 20S proteasome core and two 19S regulatory subunits. The 20S proteasome core is composed of 28 subunits that are arranged in four stacked rings, resulting in a barrel-shaped structure. The two end rings are each formed by seven alpha subunits, and the two central rings are each formed by seven beta subunits. The catalytic chamber with the active sites is on the inside of the barrel.

It localises to the cytoplasm. Its subcellular location is the nucleus. Functionally, the proteasome degrades poly-ubiquitinated proteins in the cytoplasm and in the nucleus. It is essential for the regulated turnover of proteins and for the removal of misfolded proteins. The proteasome is a multicatalytic proteinase complex that is characterized by its ability to cleave peptides with Arg, Phe, Tyr, Leu, and Glu adjacent to the leaving group at neutral or slightly basic pH. It has an ATP-dependent proteolytic activity. The protein is Proteasome subunit alpha type-2 (PRE8) of Saccharomyces cerevisiae (strain ATCC 204508 / S288c) (Baker's yeast).